The primary structure comprises 63 residues: Large ribosomal subunit protein bL28 (63 aa).

Belongs to the bacterial ribosomal protein bL28 family.

This is Large ribosomal subunit protein bL28 from Alkaliphilus metalliredigens (strain QYMF).